Reading from the N-terminus, the 340-residue chain is Ferredoxin--NADP reductase (340 aa).

FAD is bound by residues Thr20, Asp39, Gln47, Tyr52, Val92, Phe126, Asp293, and Thr334.

Belongs to the ferredoxin--NADP reductase type 2 family. In terms of assembly, homodimer. The cofactor is FAD.

The enzyme catalyses 2 reduced [2Fe-2S]-[ferredoxin] + NADP(+) + H(+) = 2 oxidized [2Fe-2S]-[ferredoxin] + NADPH. The sequence is that of Ferredoxin--NADP reductase from Gluconobacter oxydans (strain 621H) (Gluconobacter suboxydans).